Here is a 359-residue protein sequence, read N- to C-terminus: 3-dehydroquinate synthase (359 aa).

NAD(+)-binding positions include Asp-70–Lys-75, Gly-105–Asp-109, Thr-129–Thr-130, Lys-142, Lys-151, and Phe-169–Thr-172. Glu-184, His-247, and His-264 together coordinate Zn(2+).

This sequence belongs to the sugar phosphate cyclases superfamily. Dehydroquinate synthase family. Co(2+) serves as cofactor. Requires Zn(2+) as cofactor. NAD(+) is required as a cofactor.

Its subcellular location is the cytoplasm. It catalyses the reaction 7-phospho-2-dehydro-3-deoxy-D-arabino-heptonate = 3-dehydroquinate + phosphate. It functions in the pathway metabolic intermediate biosynthesis; chorismate biosynthesis; chorismate from D-erythrose 4-phosphate and phosphoenolpyruvate: step 2/7. Functionally, catalyzes the conversion of 3-deoxy-D-arabino-heptulosonate 7-phosphate (DAHP) to dehydroquinate (DHQ). This Francisella tularensis subsp. holarctica (strain OSU18) protein is 3-dehydroquinate synthase.